The following is a 551-amino-acid chain: Palmdelphin (551 aa).

The residue at position 1 (methionine 1) is an N-acetylmethionine. Positions 12–106 (QAITDKRKIQ…LQISANEEAI (95 aa)) form a coiled coil. Lysine 125 participates in a covalent cross-link: Glycyl lysine isopeptide (Lys-Gly) (interchain with G-Cter in SUMO2). A Phosphoserine modification is found at serine 135. Lysine 178 participates in a covalent cross-link: Glycyl lysine isopeptide (Lys-Gly) (interchain with G-Cter in SUMO1); alternate. Lysine 178 participates in a covalent cross-link: Glycyl lysine isopeptide (Lys-Gly) (interchain with G-Cter in SUMO2); alternate. The span at 247-258 (ERNSKSPTEYHE) shows a compositional bias: basic and acidic residues. The disordered stretch occupies residues 247-266 (ERNSKSPTEYHEPVYANPFC). Threonine 270 is modified (phosphothreonine). Disordered stretches follow at residues 294-390 (LGNH…TCQE) and 451-533 (AEDN…GTED). Residues serine 321 and serine 349 each carry the phosphoserine modification. Over residues 341–353 (HTQQKRMASPWEE) the composition is skewed to polar residues. The segment covering 354 to 365 (SSNRQNEHEVSP) has biased composition (basic and acidic residues). 7 positions are modified to phosphoserine: serine 370, serine 375, serine 384, serine 385, serine 498, serine 515, and serine 520.

This sequence belongs to the paralemmin family. Interacts with GLUL. In terms of processing, phosphorylated. In terms of tissue distribution, ubiquitous. Expressed at highest levels in the heart and lung.

Its subcellular location is the cytoplasm. The protein resides in the cell projection. It is found in the dendrite. The protein localises to the dendritic spine. In Mus musculus (Mouse), this protein is Palmdelphin (Palmd).